The primary structure comprises 88 residues: CLAVATA3/ESR (CLE)-related protein 42 (88 aa).

A signal peptide spans M1 to Q24. Residues K69–R88 are disordered. A hydroxyproline mark is found at P79 and P82. O-linked (Ara...) hydroxyproline glycosylation occurs at P82.

Belongs to the CLV3/ESR signal peptide family. The O-glycosylation (arabinosylation) of the hydroxyproline Pro-82 enhances binding affinity of the CLE42p peptide for its receptor. As to expression, expressed at low levels in seedlings, roots and inflorescence.

It localises to the secreted. The protein localises to the extracellular space. Extracellular signal peptide that regulates cell fate. Represses tracheary element differentiation but promotes the formation of procambial cells. The chain is CLAVATA3/ESR (CLE)-related protein 42 from Arabidopsis thaliana (Mouse-ear cress).